The chain runs to 106 residues: UPF0145 protein Fphi_1781 (106 aa).

Belongs to the UPF0145 family.

The protein is UPF0145 protein Fphi_1781 of Francisella philomiragia subsp. philomiragia (strain ATCC 25017 / CCUG 19701 / FSC 153 / O#319-036).